Reading from the N-terminus, the 638-residue chain is MTTDTLEKPRLSDTAQVDSQSIAPFPNSKKIYVQGSRPDIRVPMREINLSITPTEFGGEQNPPVRVYDTSGVYTDPNVKIDVRQGLPDVRSAWIAERGDTEVLQQKSSSFTQQRLHDASLDTLRFNHQRQPLKAKPRANVTQMHYARCGIITPEMEYIAIRENMSWQQAKEQGVLDQQHAGEHFGANIPDEITPEFVRSEVACGRAIIPANINHPELEPMIIGRNFLVKINGNIGNSAVTSSIEEEVAKLTWGTRWGADTIMDLSTGKNIHETREWIIRNSSVPIGTVPIYQALEKVDGVAEDLTWEIFRDTLIEQAEQGVDYFTIHAGVLLRYVPLTAKRVTGIVSRGGSIMAKWCLAHHRENFLYTHFEDICEIMKAYDVSFSLGDGLRPGSIADANDEAQFGELETLGELTKIAWKHDVQVMIEGPGHVPMHMIKENMDKQLRECGEAPFYTLGPLTTDIAPGYDHITSGIGAAMIGWYGCAMLCYVTPKEHLGLPNKDDVKEGIITYKIAAHAADLAKGHPGAQLRDNALSKARFEFRWEDQFNLGLDPDTARSYHDETLPKDSAKVAHFCSMCGPKFCSMKITQEVRDYAAEHGTDITPIAEDEVVRMIDVEAEMRKKSEEFREKGSEIYGKI.

Substrate-binding positions include asparagine 233, methionine 262, tyrosine 291, histidine 327, 347 to 349 (SRG), 388 to 391 (DGLR), and glutamate 427. Residue histidine 431 participates in Zn(2+) binding. Tyrosine 454 provides a ligand contact to substrate. A Zn(2+)-binding site is contributed by histidine 495. 3 residues coordinate [4Fe-4S] cluster: cysteine 575, cysteine 578, and cysteine 583.

It belongs to the ThiC family. Homodimer. [4Fe-4S] cluster serves as cofactor.

It carries out the reaction 5-amino-1-(5-phospho-beta-D-ribosyl)imidazole + S-adenosyl-L-methionine = 4-amino-2-methyl-5-(phosphooxymethyl)pyrimidine + CO + 5'-deoxyadenosine + formate + L-methionine + 3 H(+). Its pathway is cofactor biosynthesis; thiamine diphosphate biosynthesis. Functionally, catalyzes the synthesis of the hydroxymethylpyrimidine phosphate (HMP-P) moiety of thiamine from aminoimidazole ribotide (AIR) in a radical S-adenosyl-L-methionine (SAM)-dependent reaction. The chain is Phosphomethylpyrimidine synthase from Saccharophagus degradans (strain 2-40 / ATCC 43961 / DSM 17024).